Here is a 650-residue protein sequence, read N- to C-terminus: Replication protein E1 (650 aa).

Positions 84-86 (KRK) match the Nuclear localization signal motif. Phosphoserine; by host occurs at positions 90, 94, 108, and 121. Positions 107–116 (LSPQINVLSI) match the Nuclear export signal motif. Residues 187 to 353 (TESTPITDIT…QTLVQHSLDD (167 aa)) form a DNA-binding region region. One can recognise an SF3 helicase domain in the interval 452 to 602 (VEFMPFLITL…FPFDSNGNPL (151 aa)). 478–485 (GPPDTGKS) is an ATP binding site. Residue K559 forms a Glycyl lysine isopeptide (Lys-Gly) (interchain with G-Cter in SUMO) linkage.

It belongs to the papillomaviridae E1 protein family. Can form hexamers. Interacts with E2 protein; this interaction increases E1 DNA binding specificity. Interacts with host DNA polymerase subunit POLA2. Interacts with host single stranded DNA-binding protein RPA1. Interacts with host TOP1; this interaction stimulates the enzymatic activity of TOP1. In terms of processing, phosphorylated. Post-translationally, sumoylated.

Its subcellular location is the host nucleus. The catalysed reaction is Couples ATP hydrolysis with the unwinding of duplex DNA by translocating in the 3'-5' direction.. It catalyses the reaction ATP + H2O = ADP + phosphate + H(+). Functionally, ATP-dependent DNA 3'-5' helicase required for initiation of viral DNA replication. It forms a complex with the viral E2 protein. The E1-E2 complex binds to the replication origin which contains binding sites for both proteins. During the initial step, a dimer of E1 interacts with a dimer of protein E2 leading to a complex that binds the viral origin of replication with high specificity. Then, a second dimer of E1 displaces the E2 dimer in an ATP-dependent manner to form the E1 tetramer. Following this, two E1 monomers are added to each half of the site, which results in the formation of two E1 trimers on the viral ori. Subsequently, two hexamers will be created. The double hexamer acts as a bi-directional helicase machinery and unwinds the viral DNA and then recruits the host DNA polymerase to start replication. The chain is Replication protein E1 from Homo sapiens (Human).